Here is a 46-residue protein sequence, read N- to C-terminus: Apamin (46 aa).

The signal sequence occupies residues 1 to 27 (MISMLRCIYLFLSVILITSYFVTPVMP). Disulfide bonds link Cys28/Cys38 and Cys30/Cys42. An essential for toxin activity region spans residues 40 to 41 (RR). At His45 the chain carries Histidine amide.

As to expression, expressed by the venom gland.

It localises to the secreted. Functionally, toxin with unique selectivity to KCa2 channels. Potently blocks human, rat and mouse KCa2.2/KCNN2/SK2 channels (IC(50)=27-140 pM), and moderately blocks human and rat KCa2.3/KCNN3/SK3 channels (IC(50)=0.6-4 nM), and human (IC(50)=0.7-12 nM) and mouse (IC(50)=28 nM) KCa2.1/KCNN1/SK1 channels. Does not show any antimicrobial activity. In vivo, intracerebroventricular injection into rats of a dose of 1 ng results in neurodegeneration specifically in the Purkinje cells of the cerebellum, and induces seizures characterized by hypersensitivity to noise, loss of postural control, paroxystic jerking, and alternating periods of great agitation with tonic-clonic convulsions and periods of total prostration. When administered at high doses, exerts anti-inflammatory, anti-oxidative, anti-fibrotic and anti-apoptotic properties in several models of inflammatory disease, including gouty arthritis, atherosclerosis, atopic dermatitis and acute kidney injury. Down-regulates pro-inflammatory signaling pathways, such as the NF-kappaB and STAT3 pathways, probably by blocking SK channels such as KCa2.2/KCNN2/SK2 and/or KCa2.3/KCNN3/SK3 which are thought to be involved in promoting some inflammatory responses. For example in mouse and rat microglia cells, inhibits LPS-activated KCa2.2/KCNN2/SK2 channels and TLR4 expression leading to the down-regulation of the NF-kappaB, STAT, and MAPK/ERK signaling pathways and, as a consequence, decreases secretion of pro-inflammatory cytokines. The sequence is that of Apamin from Apis mellifera (Honeybee).